Here is a 209-residue protein sequence, read N- to C-terminus: Protein-L-isoaspartate O-methyltransferase (209 aa).

Serine 55 is an active-site residue.

Belongs to the methyltransferase superfamily. L-isoaspartyl/D-aspartyl protein methyltransferase family.

The protein resides in the cytoplasm. It catalyses the reaction [protein]-L-isoaspartate + S-adenosyl-L-methionine = [protein]-L-isoaspartate alpha-methyl ester + S-adenosyl-L-homocysteine. Functionally, catalyzes the methyl esterification of L-isoaspartyl residues in peptides and proteins that result from spontaneous decomposition of normal L-aspartyl and L-asparaginyl residues. It plays a role in the repair and/or degradation of damaged proteins. The sequence is that of Protein-L-isoaspartate O-methyltransferase from Anaeromyxobacter dehalogenans (strain 2CP-1 / ATCC BAA-258).